Reading from the N-terminus, the 338-residue chain is Uroporphyrinogen decarboxylase (338 aa).

Residues 27–31 (RQAGR), aspartate 77, tyrosine 151, serine 203, and histidine 317 each bind substrate.

It belongs to the uroporphyrinogen decarboxylase family. Homodimer.

It is found in the cytoplasm. It catalyses the reaction uroporphyrinogen III + 4 H(+) = coproporphyrinogen III + 4 CO2. It participates in porphyrin-containing compound metabolism; protoporphyrin-IX biosynthesis; coproporphyrinogen-III from 5-aminolevulinate: step 4/4. Catalyzes the decarboxylation of four acetate groups of uroporphyrinogen-III to yield coproporphyrinogen-III. The polypeptide is Uroporphyrinogen decarboxylase (Wolbachia pipientis wMel).